The chain runs to 78 residues: Acyl carrier protein (78 aa).

In terms of domain architecture, Carrier spans 2–77 (SNIEDRVRKI…AAIDYVNSAS (76 aa)). Serine 37 is modified (O-(pantetheine 4'-phosphoryl)serine).

Belongs to the acyl carrier protein (ACP) family. Post-translationally, 4'-phosphopantetheine is transferred from CoA to a specific serine of apo-ACP by AcpS. This modification is essential for activity because fatty acids are bound in thioester linkage to the sulfhydryl of the prosthetic group.

The protein localises to the cytoplasm. Its pathway is lipid metabolism; fatty acid biosynthesis. Its function is as follows. Carrier of the growing fatty acid chain in fatty acid biosynthesis. This is Acyl carrier protein from Photobacterium profundum (strain SS9).